A 282-amino-acid chain; its full sequence is ATP phosphoribosyltransferase (282 aa).

Belongs to the ATP phosphoribosyltransferase family. Long subfamily. Requires Mg(2+) as cofactor.

The protein resides in the cytoplasm. The catalysed reaction is 1-(5-phospho-beta-D-ribosyl)-ATP + diphosphate = 5-phospho-alpha-D-ribose 1-diphosphate + ATP. The protein operates within amino-acid biosynthesis; L-histidine biosynthesis; L-histidine from 5-phospho-alpha-D-ribose 1-diphosphate: step 1/9. Its activity is regulated as follows. Feedback inhibited by histidine. Functionally, catalyzes the condensation of ATP and 5-phosphoribose 1-diphosphate to form N'-(5'-phosphoribosyl)-ATP (PR-ATP). Has a crucial role in the pathway because the rate of histidine biosynthesis seems to be controlled primarily by regulation of HisG enzymatic activity. This Pyrobaculum neutrophilum (strain DSM 2338 / JCM 9278 / NBRC 100436 / V24Sta) (Thermoproteus neutrophilus) protein is ATP phosphoribosyltransferase.